Consider the following 501-residue polypeptide: Cytochrome P450 monooxygenase janQ (501 aa).

Residues M1–R16 traverse the membrane as a helical segment. N132 carries an N-linked (GlcNAc...) asparagine glycan. Position 439 (C439) interacts with heme.

This sequence belongs to the cytochrome P450 family. Heme is required as a cofactor.

The protein localises to the membrane. Its pathway is secondary metabolite biosynthesis. Its function is as follows. Cytochrome P450 monooxygenase; part of the gene cluster that mediates the biosynthesis of the indole diterpenes janthitremanes such as shearinine K or shearinine A. The geranylgeranyl diphosphate (GGPP) synthase janG catalyzes the first step in janthitremane biosynthesis via conversion of farnesyl pyrophosphate and isopentyl pyrophosphate into geranylgeranyl pyrophosphate (GGPP). Condensation of indole-3-glycerol phosphate with GGPP by the prenyl transferase janC then forms 3-geranylgeranylindole (3-GGI). Epoxidation by the FAD-dependent monooxygenase janM leads to a epoxidized-GGI that is substrate of the terpene cyclase janB for cyclization to yield paspaline. Paspaline is subsequently converted to 13-desoxypaspaline by the cytochrome P450 monooxygenase janP, via beta-PC-M6 in a series of alpha-face oxidations. The cytochrome P450 monooxygenase janQ is proposed to carry out sequential beta-face oxidation steps at C-7 and C-13 of 13-desoxypaspaline to form paspalicine and paspalinine respectively. The indole diterpene prenyltransferase janD may then convert paspalinine into shearinine K which is substrate of janO and/or additional enzymes for oxidation and cyclization to generate shearinine A. This Penicillium janthinellum (Penicillium vitale) protein is Cytochrome P450 monooxygenase janQ.